Reading from the N-terminus, the 794-residue chain is Protein smoothened (794 aa).

Positions 1–15 (GPCWLWALALGLALG) are cleaved as a signal peptide. The Extracellular segment spans residues 16–201 (PRRCPAAPLN…FTETEHREMH (186 aa)). Asn-25 is a glycosylation site (N-linked (GlcNAc...) asparagine). 5 disulfides stabilise this stretch: Cys-34/Cys-148, Cys-40/Cys-104, Cys-48/Cys-97, Cys-88/Cys-124, and Cys-117/Cys-139. Residues 35 to 151 (RRPAACERLR…DRFPEGCPNE (117 aa)) enclose the FZ domain. Asp-65 is a binding site for cholesterol. An N-linked (GlcNAc...) asparagine glycan is attached at Asn-158. Intrachain disulfides connect Cys-163-Cys-183 and Cys-187-Cys-264. A helical transmembrane segment spans residues 202-222 (VYIAFSSVTISCTFFTLATFV). Over 223–231 (ADWRNSNRY) the chain is Cytoplasmic. Residues 232-252 (PAVILFYVNACFFVGSIGCVA) form a helical membrane-spanning segment. Topologically, residues 253–283 (QFMDGARDEIVCRADGTMRLGEPTSNETLSC) are extracellular. Asn-278 carries an N-linked (GlcNAc...) asparagine glycan. Cysteines 283 and 359 form a disulfide. A helical membrane pass occupies residues 284-304 (VIIFVIVYYSLMSGVIWFVML). At 305-327 (TYAWHTSFKALGTTYQPLLGKTS) the chain is on the cytoplasmic side. The helical transmembrane segment at 328–348 (YFHLITWSIPFVLTVAILAVA) threads the bilayer. Residues 349–371 (QVDGDSVSGICFVGYKNYRYRAG) are Extracellular-facing. Residue Tyr-363 participates in cholesterol binding. Residues 372-392 (FVLAPIGLVLIVGGYFLIRGV) form a helical membrane-spanning segment. At 393 to 420 (MTLFSIKSNHPGLLSEKAASKINETMLR) the chain is on the cytoplasmic side. Residues 421–440 (LGIFGFLAFGFVFITFGCHF) traverse the membrane as a helical segment. Topologically, residues 441–493 (YDFFNQAEWERSFREYVLCEANVTIATQTNKPIPECEIKNRPSLLVEKINLFA) are extracellular. The cysteines at positions 459 and 476 are disulfide-linked. An N-linked (GlcNAc...) asparagine glycan is attached at Asn-462. The chain crosses the membrane as a helical span at residues 494 to 514 (MFGTGISMSTWVWTKATLLIW). Topologically, residues 515–794 (KRTWCRLTGQ…AELLDADLDF (280 aa)) are cytoplasmic. 2 disordered regions span residues 634–655 (LQKR…CPER) and 723–773 (PFCP…RAGL). Residues 637 to 647 (RSRKKKRRKKK) are compositionally biased toward basic residues.

It belongs to the G-protein coupled receptor Fz/Smo family. Homodimer.

It localises to the cell membrane. The protein localises to the cell projection. It is found in the cilium. Its function is as follows. G protein-coupled receptor which associates with the patched protein (PTCH) to transduce hedgehog protein signaling. Binding of sonic hedgehog (SHH) to its receptor patched prevents inhibition of smoothened (SMO) by patched. When active, SMO binds to and sequesters protein kinase A catalytic subunit PRKACA at the cell membrane, preventing PRKACA-mediated phosphorylation of GLI transcription factors which releases the GLI proteins from PRKACA-mediated inhibition and allows for transcriptional activation of hedgehog pathway target genes. In Gallus gallus (Chicken), this protein is Protein smoothened (SMO).